The primary structure comprises 252 residues: Mitochondrial cardiolipin hydrolase (252 aa).

The Mitochondrial intermembrane portion of the chain corresponds to 1–4 (MGRL). The tract at residues 1–39 (MGRLSWQVAAAAAVGLALTLEALPWVLRWLRSRRRRPRR) is required for mitochondrial localization. The helical transmembrane segment at 5 to 27 (SWQVAAAAAVGLALTLEALPWVL) threads the bilayer. The Cytoplasmic segment spans residues 28–252 (RWLRSRRRRP…TCGTSSESQT (225 aa)). The C3H1-type; atypical zinc-finger motif lies at 45 to 78 (PSQVTCTEALLRAPGAELAELPEGCPCGLPHGES). Residues 151–178 (DPGYMHHKFAIVDKRVLITGSLNWTTQA) form the PLD phosphodiesterase domain. Residues histidine 156, lysine 158, and aspartate 163 contribute to the active site.

Belongs to the phospholipase D family. MitoPLD/Zucchini subfamily. Homodimer. Interacts with MOV10L1. Interacts with MIGA1 and MIGA2; possibly facilitating homodimer formation. Interacts with GK2. As to expression, predominantly expressed in testis and ovary, but not limited to gonads (at protein level). It is also found in brain, heart, pituitary gland, prostate, pancreas, thyroid, bone marrow, lung and muscle.

It is found in the mitochondrion outer membrane. Its subcellular location is the golgi apparatus. The enzyme catalyses a cardiolipin + H2O = a 1,2-diacyl-sn-glycero-3-phospho-(1'-sn-glycerol) + a 1,2-diacyl-sn-glycero-3-phosphate + H(+). Its activity is regulated as follows. MYC stimulates its phospholipase activity. MIGA1 and MIGA2 increase PLD6 self-association affinity and affects the homodimer conformation facilitating its phospholipase activity over the nuclease activity. Single stranded DNA (ssDNA) hydrolase activity does not depend upon, but is stimulated by the presence of Ca(2+) and Mn(2+). Functionally, presents phospholipase and nuclease activities, depending on the different physiological conditions. Interaction with Mitoguardin (MIGA1 or MIGA2) affects the dimer conformation, facilitating the lipase activity over the nuclease activity. Plays a key role in mitochondrial fusion and fission via its phospholipase activity. In its phospholipase role, it uses the mitochondrial lipid cardiolipin as substrate to generate phosphatidate (PA or 1,2-diacyl-sn-glycero-3-phosphate), a second messenger signaling lipid. Production of PA facilitates Mitofusin-mediated fusion, whereas the cleavage of PA by the Lipin family of phosphatases produces diacylgycerol (DAG) which promotes mitochondrial fission. Both Lipin and DAG regulate mitochondrial dynamics and membrane fusion/fission, important processes for adapting mitochondrial metabolism to changes in cell physiology. Mitochondrial fusion enables cells to cope with the increased nucleotide demand during DNA synthesis. Mitochondrial function and dynamics are closely associated with biological processes such as cell growth, proliferation, and differentiation. Mediator of MYC activity, promotes mitochondrial fusion and activates AMPK which in turn inhibits YAP/TAZ, thereby inducing cell growth and proliferation. The endonuclease activity plays a critical role in PIWI-interacting RNA (piRNA) biogenesis during spermatogenesis. Implicated in spermatogenesis and sperm fertility in testicular germ cells, its single strand-specific nuclease activity is critical for the biogenesis/maturation of PIWI-interacting RNA (piRNA). MOV10L1 selectively binds to piRNA precursors and funnels them to the endonuclease that catalyzes the first cleavage step of piRNA processing to generate piRNA intermediate fragments that are subsequently loaded to Piwi proteins. Cleaves either DNA or RNA substrates with similar affinity, producing a 5' phosphate end, in this way it participates in the processing of primary piRNA transcripts. piRNAs provide essential protection against the activity of mobile genetic elements. piRNA-mediated transposon silencing is thus critical for maintaining genome stability, in particular in germline cells when transposons are mobilized as a consequence of wide-spread genomic demethylation. PA may act as signaling molecule in the recognition/transport of the precursor RNAs of primary piRNAs. Interacts with tesmin in testes, suggesting a role in spermatogenesis via association with its interacting partner. This chain is Mitochondrial cardiolipin hydrolase (PLD6), found in Homo sapiens (Human).